Reading from the N-terminus, the 373-residue chain is Anhydro-N-acetylmuramic acid kinase (373 aa).

12–19 provides a ligand contact to ATP; it reads GTSLDGVD.

The protein belongs to the anhydro-N-acetylmuramic acid kinase family.

It catalyses the reaction 1,6-anhydro-N-acetyl-beta-muramate + ATP + H2O = N-acetyl-D-muramate 6-phosphate + ADP + H(+). The protein operates within amino-sugar metabolism; 1,6-anhydro-N-acetylmuramate degradation. Its pathway is cell wall biogenesis; peptidoglycan recycling. Functionally, catalyzes the specific phosphorylation of 1,6-anhydro-N-acetylmuramic acid (anhMurNAc) with the simultaneous cleavage of the 1,6-anhydro ring, generating MurNAc-6-P. Is required for the utilization of anhMurNAc either imported from the medium or derived from its own cell wall murein, and thus plays a role in cell wall recycling. The sequence is that of Anhydro-N-acetylmuramic acid kinase from Salmonella newport (strain SL254).